Reading from the N-terminus, the 526-residue chain is Dolichyl pyrophosphate Glc1Man9GlcNAc2 alpha-1,3-glucosyltransferase (526 aa).

The next 11 membrane-spanning stretches (helical) occupy residues 4–24 (FGIA…VTLL), 103–122 (LLFQ…YAVH), 143–163 (FILS…HIHF), 188–208 (GAFL…VAPA), 238–258 (LISL…PFLA), 334–354 (PLAT…CLWC), 368–388 (LCAL…ILLA), 389–409 (VLPM…FLIL), 427–449 (LPIK…KTLF), 461–481 (TFYL…FPFT), and 488–508 (PFIP…YAWL).

It belongs to the ALG6/ALG8 glucosyltransferase family.

It is found in the endoplasmic reticulum membrane. It catalyses the reaction an alpha-D-Glc-(1-&gt;3)-alpha-D-Man-(1-&gt;2)-alpha-D-Man-(1-&gt;2)-alpha-D-Man-(1-&gt;3)-[alpha-D-Man-(1-&gt;2)-alpha-D-Man-(1-&gt;3)-[alpha-D-Man-(1-&gt;2)-alpha-D-Man-(1-&gt;6)]-alpha-D-Man-(1-&gt;6)]-beta-D-Man-(1-&gt;4)-beta-D-GlcNAc-(1-&gt;4)-alpha-D-GlcNAc-diphospho-di-trans,poly-cis-dolichol + a di-trans,poly-cis-dolichyl beta-D-glucosyl phosphate = an alpha-D-Glc-(1-&gt;3)-alpha-D-Glc-(1-&gt;3)-alpha-D-Man-(1-&gt;2)-alpha-D-Man-(1-&gt;2)-alpha-D-Man-(1-&gt;3)-[alpha-D-Man-(1-&gt;2)-alpha-D-Man-(1-&gt;3)-[alpha-D-Man-(1-&gt;2)-alpha-D-Man-(1-&gt;6)]-alpha-D-Man-(1-&gt;6)]-beta-D-Man-(1-&gt;4)-beta-D-GlcNAc-(1-&gt;4)-alpha-D-GlcNAc-diphospho-di-trans,poly-cis-dolichol + a di-trans,poly-cis-dolichyl phosphate + H(+). It functions in the pathway protein modification; protein glycosylation. Dolichyl pyrophosphate Glc1Man9GlcNAc2 alpha-1,3-glucosyltransferase that operates in the biosynthetic pathway of dolichol-linked oligosaccharides, the glycan precursors employed in protein asparagine (N)-glycosylation. The assembly of dolichol-linked oligosaccharides begins on the cytosolic side of the endoplasmic reticulum membrane and finishes in its lumen. The sequential addition of sugars to dolichol pyrophosphate produces dolichol-linked oligosaccharides containing fourteen sugars, including two GlcNAcs, nine mannoses and three glucoses. Once assembled, the oligosaccharide is transferred from the lipid to nascent proteins by oligosaccharyltransferases. In the lumen of the endoplasmic reticulum, adds the second glucose residue from dolichyl phosphate glucose (Dol-P-Glc) onto the lipid-linked oligosaccharide intermediate Glc(1)Man(9)GlcNAc(2)-PP-Dol to produce Glc(2)Man(9)GlcNAc(2)-PP-Dol. Glc(2)Man(9)GlcNAc(2)-PP-Dol is a substrate for ALG10, the following enzyme in the biosynthetic pathway. Required for PKD1/Polycystin-1 maturation and localization to the plasma membrane of the primary cilia. The protein is Dolichyl pyrophosphate Glc1Man9GlcNAc2 alpha-1,3-glucosyltransferase of Bos taurus (Bovine).